A 100-amino-acid chain; its full sequence is MALQDESLGIDQLSVDYDYLVYRISDRVKSLELEATRLVQRQNELVGQVSERVIDENIERFRGVLRGLDELEEYFAMMEQIGMITDSFKERLDSAMAALK.

A coiled-coil region spans residues 25–46 (SDRVKSLELEATRLVQRQNELV).

Belongs to the BLOC1S4 family. Component of the biogenesis of lysosome-related organelles complex-1 (BLOC-1).

The protein localises to the cytoplasm. Its function is as follows. Component of the biogenesis of lysosome-related organelles complex-1 (BLOC-1), a complex that is involved in endosomal cargo sorting. The chain is Biogenesis of lysosome-related organelles complex 1 subunit CNL1 (CLN1) from Candida glabrata (strain ATCC 2001 / BCRC 20586 / JCM 3761 / NBRC 0622 / NRRL Y-65 / CBS 138) (Yeast).